A 364-amino-acid chain; its full sequence is DNA replication and repair protein RecF (364 aa).

Position 30-37 (30-37 (GNNGMGKT)) interacts with ATP.

This sequence belongs to the RecF family.

Its subcellular location is the cytoplasm. The RecF protein is involved in DNA metabolism; it is required for DNA replication and normal SOS inducibility. RecF binds preferentially to single-stranded, linear DNA. It also seems to bind ATP. The polypeptide is DNA replication and repair protein RecF (Porphyromonas gingivalis (strain ATCC 33277 / DSM 20709 / CIP 103683 / JCM 12257 / NCTC 11834 / 2561)).